The following is a 215-amino-acid chain: uncharacterized protein (215 aa).

Residues 98–119 (AAALAVAVASLCVCTLLLTHIV) form a helical membrane-spanning segment.

The protein resides in the membrane. This is an uncharacterized protein from Treponema pallidum (strain Nichols).